The sequence spans 861 residues: Glucans biosynthesis glucosyltransferase H (861 aa).

Disordered stretches follow at residues Arg-65–Arg-89 and Ala-101–Pro-129. Composition is skewed to basic and acidic residues over residues Ser-67–Thr-76 and Leu-105–Val-114. The next 6 helical transmembrane spans lie at Phe-181–Leu-201, Leu-208–Phe-228, Val-532–Leu-552, Leu-589–Val-609, Gly-616–Ala-636, and Phe-698–Met-718.

The protein belongs to the glycosyltransferase 2 family. OpgH subfamily.

The protein resides in the cell inner membrane. It functions in the pathway glycan metabolism; osmoregulated periplasmic glucan (OPG) biosynthesis. Functionally, involved in the biosynthesis of osmoregulated periplasmic glucans (OPGs). This chain is Glucans biosynthesis glucosyltransferase H, found in Cupriavidus pinatubonensis (strain JMP 134 / LMG 1197) (Cupriavidus necator (strain JMP 134)).